The following is a 1214-amino-acid chain: Inner capsid protein VP3 (1214 aa).

A disordered region spans residues 1–80 (MPRRSARKAQ…SVNNDGDIIT (80 aa)). A compositionally biased stretch (polar residues) spans 8–18 (KAQSATASPAD). Over residues 28–51 (PTTNSPPSTTSPNQAAADANQQQA) the composition is skewed to low complexity. Residues 117–140 (YVCNVCNARFSTMSALSEHLRSDH) form a C2H2-type zinc finger.

Belongs to the turreted BTV-fold inner capsid family. As to quaternary structure, homodecamer; each decamer is made up of two conformers of VP2, called VP2A and VP2B. 12 homodecamers assemble to form an icosahedral capsid. Interacts with VP6.

The protein resides in the virion. Functionally, inner capsid protein that self-assembles to form an icosahedral capsid with a T=2 symmetry, which consists of 120 copies of VP2, with channels at each of its five-fold vertices. This capsid constitutes the innermost concentric layer of the viral mature particle. This is Inner capsid protein VP3 (S3) from Notemigonus crysoleucas (Golden shiner).